The primary structure comprises 163 residues: Nucleotide-binding protein YajQ (163 aa).

The protein belongs to the YajQ family.

In terms of biological role, nucleotide-binding protein. In Salmonella paratyphi A (strain ATCC 9150 / SARB42), this protein is Nucleotide-binding protein YajQ.